Here is a 229-residue protein sequence, read N- to C-terminus: Urease accessory protein UreF (229 aa).

This sequence belongs to the UreF family. In terms of assembly, ureD, UreF and UreG form a complex that acts as a GTP-hydrolysis-dependent molecular chaperone, activating the urease apoprotein by helping to assemble the nickel containing metallocenter of UreC. The UreE protein probably delivers the nickel.

The protein resides in the cytoplasm. Required for maturation of urease via the functional incorporation of the urease nickel metallocenter. The sequence is that of Urease accessory protein UreF from Staphylococcus saprophyticus subsp. saprophyticus (strain ATCC 15305 / DSM 20229 / NCIMB 8711 / NCTC 7292 / S-41).